The primary structure comprises 1609 residues: Transmembrane protein 131-like (1609 aa).

Positions 1 to 40 are cleaved as a signal peptide; it reads MAGLRRPQPGCYCRTAAAVNLLLGVFQVLLPCCRPGGAQG. At 41 to 869 the chain is on the extracellular side; that stretch reads QAIEPLPNVV…VVPGPSWEES (829 aa). N-linked (GlcNAc...) asparagine glycans are attached at residues asparagine 343, asparagine 439, asparagine 522, asparagine 593, asparagine 709, and asparagine 846. The segment at 696–916 is required for Wnt-signaling inhibition and LRP6 degradation; the sequence is DYGKVTSLIL…QNASSSSQQN (221 aa). Residues 870 to 890 form a helical membrane-spanning segment; sequence FWRLTVFFVSLSLLGVILIAF. At 891-1609 the chain is on the cytoplasmic side; the sequence is QQAQYILMEF…SRDSSYCGNV (719 aa). 5 disordered regions span residues 946 to 974, 991 to 1014, 1108 to 1144, 1159 to 1178, and 1304 to 1340; these read RGKN…YGHS, TAAA…SSLP, KTSK…NQQV, VDTK…EDMF, and SSSD…PMVD. Positions 952–961 are enriched in polar residues; it reads PVNTPQSRIQ. The span at 991–1000 shows a compositional bias: low complexity; that stretch reads TAAASSTSTT. Serine 1122 bears the Phosphoserine mark. The segment covering 1304 to 1331 has biased composition (low complexity); sequence SSSDCGSSSGSVRASRGSWGSWSSTSSS.

This sequence belongs to the TMEM131 family. As to expression, expressed in thymocytes.

Its subcellular location is the cell membrane. The protein resides in the cytoplasm. It localises to the endoplasmic reticulum. Its function is as follows. Membrane-associated form that antagonizes canonical Wnt signaling by triggering lysosome-dependent degradation of Wnt-activated LRP6. Regulates thymocyte proliferation. The chain is Transmembrane protein 131-like from Homo sapiens (Human).